A 78-amino-acid polypeptide reads, in one-letter code: DNA-directed RNA polymerase subunit omega (78 aa).

Belongs to the RNA polymerase subunit omega family. In cyanobacteria the RNAP catalytic core is composed of 2 alpha, 1 beta, 1 beta', 1 gamma and 1 omega subunit. When a sigma factor is associated with the core the holoenzyme is formed, which can initiate transcription.

It carries out the reaction RNA(n) + a ribonucleoside 5'-triphosphate = RNA(n+1) + diphosphate. Its function is as follows. Promotes RNA polymerase assembly. Latches the N- and C-terminal regions of the beta' subunit thereby facilitating its interaction with the beta and alpha subunits. This is DNA-directed RNA polymerase subunit omega from Nostoc punctiforme (strain ATCC 29133 / PCC 73102).